Reading from the N-terminus, the 287-residue chain is Fructose-1,6-bisphosphatase class 1 (287 aa).

The Mg(2+) site is built by Glu-67, Asp-87, Leu-89, and Asp-90. Substrate contacts are provided by residues 90–93 (DGSS), Tyr-195, and Lys-225. Glu-231 serves as a coordination point for Mg(2+).

It belongs to the FBPase class 1 family. As to quaternary structure, homotetramer. It depends on Mg(2+) as a cofactor.

Its subcellular location is the cytoplasm. The catalysed reaction is beta-D-fructose 1,6-bisphosphate + H2O = beta-D-fructose 6-phosphate + phosphate. It participates in carbohydrate biosynthesis; gluconeogenesis. In Halobacterium salinarum (strain ATCC 29341 / DSM 671 / R1), this protein is Fructose-1,6-bisphosphatase class 1.